A 399-amino-acid chain; its full sequence is S-adenosylmethionine synthase (399 aa).

An ATP-binding site is contributed by Gly135–Asp140.

The protein belongs to the AdoMet synthase 2 family. The cofactor is Mg(2+).

It catalyses the reaction L-methionine + ATP + H2O = S-adenosyl-L-methionine + phosphate + diphosphate. It participates in amino-acid biosynthesis; S-adenosyl-L-methionine biosynthesis; S-adenosyl-L-methionine from L-methionine: step 1/1. Functionally, catalyzes the formation of S-adenosylmethionine from methionine and ATP. In Archaeoglobus fulgidus (strain ATCC 49558 / DSM 4304 / JCM 9628 / NBRC 100126 / VC-16), this protein is S-adenosylmethionine synthase (mat).